We begin with the raw amino-acid sequence, 779 residues long: Probable ATP-dependent RNA helicase DHX40 (779 aa).

Residues 1 to 28 (MSRFPAVAGRAPRRQEEGERSRDLQEER) are disordered. A compositionally biased stretch (basic and acidic residues) spans 13-28 (RRQEEGERSRDLQEER). The 169-residue stretch at 63–231 (IQAVRDNSFL…FGNCPIFDIP (169 aa)) folds into the Helicase ATP-binding domain. Residue 76-83 (GNTGSGKT) participates in ATP binding. The short motif at 173-176 (DEAH) is the DEAH box element. The region spanning 263-442 (TMDIHLNEMA…SVVLTLKCLA (180 aa)) is the Helicase C-terminal domain. The tract at residues 737-779 (SKDVLKKMQRRNDDKSISDARARFLERKQQRTQDHSDTRKETG) is disordered.

Belongs to the DEAD box helicase family. DEAH subfamily. As to expression, ubiquitously expressed.

The catalysed reaction is ATP + H2O = ADP + phosphate + H(+). Its function is as follows. Probable ATP-dependent RNA helicase. This is Probable ATP-dependent RNA helicase DHX40 (DHX40) from Homo sapiens (Human).